The following is a 481-amino-acid chain: Inosine-5'-monophosphate dehydrogenase (481 aa).

2 consecutive CBS domains span residues Val92–Val148 and Met152–Asn209. Residues Asp244 and Gly293–Gly295 contribute to the NAD(+) site. The K(+) site is built by Gly295 and Gly297. IMP is bound at residue Ser298. K(+) is bound at residue Cys300. The active-site Thioimidate intermediate is Cys300. IMP is bound by residues Asp333–Gly335, Gly356–Ser357, and Tyr380–Gly384. The Proton acceptor role is filled by Arg396. Glu410 contacts IMP. Residues Glu464, Ser465, and His466 each contribute to the K(+) site.

It belongs to the IMPDH/GMPR family. As to quaternary structure, homotetramer. It depends on K(+) as a cofactor.

The catalysed reaction is IMP + NAD(+) + H2O = XMP + NADH + H(+). It functions in the pathway purine metabolism; XMP biosynthesis via de novo pathway; XMP from IMP: step 1/1. Its activity is regulated as follows. Mycophenolic acid (MPA) is a non-competitive inhibitor that prevents formation of the closed enzyme conformation by binding to the same site as the amobile flap. In contrast, mizoribine monophosphate (MZP) is a competitive inhibitor that induces the closed conformation. MPA is a potent inhibitor of mammalian IMPDHs but a poor inhibitor of the bacterial enzymes. MZP is a more potent inhibitor of bacterial IMPDH. Catalyzes the conversion of inosine 5'-phosphate (IMP) to xanthosine 5'-phosphate (XMP), the first committed and rate-limiting step in the de novo synthesis of guanine nucleotides, and therefore plays an important role in the regulation of cell growth. The protein is Inosine-5'-monophosphate dehydrogenase of Helicobacter pylori (strain ATCC 700392 / 26695) (Campylobacter pylori).